Consider the following 44-residue polypeptide: Benzaldehyde dehydrogenase [NAD(+)] II (44 aa).

This sequence belongs to the aldehyde dehydrogenase family.

The enzyme catalyses benzaldehyde + NAD(+) + H2O = benzoate + NADH + 2 H(+). This chain is Benzaldehyde dehydrogenase [NAD(+)] II, found in Acinetobacter guillouiae (Acinetobacter genomosp. 11).